A 382-amino-acid chain; its full sequence is tRNA (guanine(37)-N(1))-methyltransferase (382 aa).

Residues H205, 243-244, 269-270, and N291 each bind S-adenosyl-L-methionine; these read DL and DA.

Belongs to the class I-like SAM-binding methyltransferase superfamily. TRM5/TYW2 family. As to quaternary structure, monomer.

It is found in the mitochondrion matrix. Its subcellular location is the nucleus. The protein resides in the cytoplasm. It carries out the reaction guanosine(37) in tRNA + S-adenosyl-L-methionine = N(1)-methylguanosine(37) in tRNA + S-adenosyl-L-homocysteine + H(+). In terms of biological role, specifically methylates the N1 position of guanosine-37 in various cytoplasmic and mitochondrial tRNAs. Methylation is not dependent on the nature of the nucleoside 5' of the target nucleoside. This is the first step in the biosynthesis of wybutosine (yW), a modified base adjacent to the anticodon of tRNAs and required for accurate decoding. The chain is tRNA (guanine(37)-N(1))-methyltransferase from Entamoeba histolytica (strain ATCC 30459 / HM-1:IMSS / ABRM).